A 51-amino-acid chain; its full sequence is Large ribosomal subunit protein eL40 (51 aa).

Belongs to the eukaryotic ribosomal protein eL40 family.

This is Large ribosomal subunit protein eL40 from Thermofilum pendens (strain DSM 2475 / Hrk 5).